A 355-amino-acid chain; its full sequence is Holliday junction branch migration complex subunit RuvB (355 aa).

Positions 4–190 (TDKLAAERII…FGIVARLEFY (187 aa)) are large ATPase domain (RuvB-L). ATP contacts are provided by residues Leu29, Arg30, Gly71, Lys74, Thr75, Thr76, 137 to 139 (EDY), Arg180, Tyr190, and Arg227. Thr75 provides a ligand contact to Mg(2+). A small ATPAse domain (RuvB-S) region spans residues 191–261 (DAEQLSRIVR…VADAALAMLD (71 aa)). The head domain (RuvB-H) stretch occupies residues 264–355 (PVGFDLMDRK…GSMWNTPDGA (92 aa)). Arg300, Arg319, and Arg324 together coordinate DNA.

It belongs to the RuvB family. In terms of assembly, homohexamer. Forms an RuvA(8)-RuvB(12)-Holliday junction (HJ) complex. HJ DNA is sandwiched between 2 RuvA tetramers; dsDNA enters through RuvA and exits via RuvB. An RuvB hexamer assembles on each DNA strand where it exits the tetramer. Each RuvB hexamer is contacted by two RuvA subunits (via domain III) on 2 adjacent RuvB subunits; this complex drives branch migration. In the full resolvosome a probable DNA-RuvA(4)-RuvB(12)-RuvC(2) complex forms which resolves the HJ.

It localises to the cytoplasm. The enzyme catalyses ATP + H2O = ADP + phosphate + H(+). Functionally, the RuvA-RuvB-RuvC complex processes Holliday junction (HJ) DNA during genetic recombination and DNA repair, while the RuvA-RuvB complex plays an important role in the rescue of blocked DNA replication forks via replication fork reversal (RFR). RuvA specifically binds to HJ cruciform DNA, conferring on it an open structure. The RuvB hexamer acts as an ATP-dependent pump, pulling dsDNA into and through the RuvAB complex. RuvB forms 2 homohexamers on either side of HJ DNA bound by 1 or 2 RuvA tetramers; 4 subunits per hexamer contact DNA at a time. Coordinated motions by a converter formed by DNA-disengaged RuvB subunits stimulates ATP hydrolysis and nucleotide exchange. Immobilization of the converter enables RuvB to convert the ATP-contained energy into a lever motion, pulling 2 nucleotides of DNA out of the RuvA tetramer per ATP hydrolyzed, thus driving DNA branch migration. The RuvB motors rotate together with the DNA substrate, which together with the progressing nucleotide cycle form the mechanistic basis for DNA recombination by continuous HJ branch migration. Branch migration allows RuvC to scan DNA until it finds its consensus sequence, where it cleaves and resolves cruciform DNA. This is Holliday junction branch migration complex subunit RuvB from Burkholderia vietnamiensis (strain G4 / LMG 22486) (Burkholderia cepacia (strain R1808)).